The sequence spans 217 residues: Monomethylamine corrinoid protein 1 (217 aa).

The B12-binding N-terminal domain maps to 1-91; sequence MANQEIFDKL…ELEKNKKEGE (91 aa). Residues 93–217 enclose the B12-binding domain; it reads AGLAITFVAE…AAKVALEVMK (125 aa). Histidine 106 contacts methylcob(III)alamin.

As to quaternary structure, can form a complex with MtmB.

Its pathway is one-carbon metabolism; methanogenesis from methylamine. Its function is as follows. Acts as a methyl group carrier between MtmB and MtbA. This is Monomethylamine corrinoid protein 1 (mtmC1) from Methanosarcina barkeri.